The chain runs to 97 residues: MVKLRLKRCGRKQRAVYRIVAIDVRSRREGRDLQKVGFYDPIKNQTYLNVPAVLYFLGKGAQPTGTVHDISKKAEIFKELRVNQTIRVNQTKGGLHI.

This sequence belongs to the bacterial ribosomal protein bS16 family.

It is found in the plastid. Its subcellular location is the chloroplast. The sequence is that of Small ribosomal subunit protein bS16c from Piper cenocladum (Ant piper).